A 1006-amino-acid polypeptide reads, in one-letter code: Probable protein phosphatase DDB_G0279461 (1006 aa).

Residues 1-12 (MMVPSLSTSISS) are compositionally biased toward polar residues. 7 disordered regions span residues 1–119 (MMVP…NNKE), 146–188 (SHAS…RSNS), 214–269 (SSED…NGIR), 312–387 (DAES…PPNQ), 459–513 (NINN…NNIQ), 525–563 (DYNI…NSKF), and 604–642 (GSIP…TSAS). Residues 59-69 (NEEEGTADNEL) show a composition bias toward acidic residues. A coiled-coil region spans residues 65–122 (ADNELESLMSLVNDNNNNNNNTSGIDDDNNNDIDDNNNNNNNNNNNNNNNNNNKEGLN). The span at 77–88 (NDNNNNNNNTSG) shows a compositional bias: low complexity. The segment covering 89–99 (IDDDNNNDIDD) has biased composition (acidic residues). Over residues 100–117 (NNNNNNNNNNNNNNNNNN) the composition is skewed to low complexity. Over residues 146–158 (SHASVSNQSSNGS) the composition is skewed to polar residues. Composition is skewed to low complexity over residues 220–234 (SCHN…NKNN), 244–254 (NINNNNNNNCN), and 316–387 (NYNN…PPNQ). The stretch at 450–516 (KIDNLNKNIN…NNNNNIQDIQ (67 aa)) forms a coiled coil. Positions 466–481 (TDSQQPLPSIDVNFSH) are enriched in polar residues. Low complexity predominate over residues 482–511 (NNNNNNNDNDNNNNNNNNNNNNNNNNNNNN). Polar residues predominate over residues 525 to 538 (DYNIQEGNDINNDN). 2 stretches are compositionally biased toward low complexity: residues 552–561 (SSNNNNNNNS) and 613–639 (NNNN…TTTT). A PPM-type phosphatase domain is found at 744 to 1005 (DINKRGLKRA…DNISIIVVTL (262 aa)). Mn(2+) contacts are provided by D784, G785, D956, and D996.

The protein in the C-terminal section; belongs to the PP2C family. Mg(2+) serves as cofactor. The cofactor is Mn(2+).

It catalyses the reaction O-phospho-L-seryl-[protein] + H2O = L-seryl-[protein] + phosphate. The enzyme catalyses O-phospho-L-threonyl-[protein] + H2O = L-threonyl-[protein] + phosphate. This is Probable protein phosphatase DDB_G0279461 from Dictyostelium discoideum (Social amoeba).